The primary structure comprises 365 residues: MLIYLFEWLSHYFKGLEVFSSYISVRIIMISITSLLITLALGRPMISWLQKMQIGQIVRDDGPQSHFSKRNTPTMGGVLILSSVIISCLLWGDLTSIYLWILILVVIFFGAIGFFDDYLKLVLKHPKGLRAKYKFALQSIFSIVLAIVLFYLLSKNGQMSLSIPFSKSLYIPIGIVIFVVLAFFIINGSSNAVNLTDGLDGLAIVPVVLVAAGLGIYAYIETNSTLANYLLFNYLGNPGLAEVAVFCAAVCGSGLAFLWFNSHPAEVFMGDVGSLTLGAVLGVIAVMVRQELIFFIMGLLFVVEALSVMLQVGSYKLRNGKRIFRMAPIHHHFELKGWPETKVVIRFWIISLILFLIGLAAIKVR.

The next 10 membrane-spanning stretches (helical) occupy residues 22 to 42 (YISV…LALG), 74 to 94 (TMGG…WGDL), 95 to 115 (TSIY…IGFF), 133 to 153 (YKFA…FYLL), 168 to 188 (SLYI…IING), 201 to 221 (GLAI…AYIE), 240 to 260 (LAEV…FLWF), 267 to 287 (VFMG…IAVM), 292 to 312 (LIFF…MLQV), and 342 to 362 (KVVI…LAAI).

The protein belongs to the glycosyltransferase 4 family. MraY subfamily. Mg(2+) serves as cofactor.

The protein localises to the cell inner membrane. It catalyses the reaction UDP-N-acetyl-alpha-D-muramoyl-L-alanyl-gamma-D-glutamyl-meso-2,6-diaminopimeloyl-D-alanyl-D-alanine + di-trans,octa-cis-undecaprenyl phosphate = di-trans,octa-cis-undecaprenyl diphospho-N-acetyl-alpha-D-muramoyl-L-alanyl-D-glutamyl-meso-2,6-diaminopimeloyl-D-alanyl-D-alanine + UMP. It functions in the pathway cell wall biogenesis; peptidoglycan biosynthesis. Functionally, catalyzes the initial step of the lipid cycle reactions in the biosynthesis of the cell wall peptidoglycan: transfers peptidoglycan precursor phospho-MurNAc-pentapeptide from UDP-MurNAc-pentapeptide onto the lipid carrier undecaprenyl phosphate, yielding undecaprenyl-pyrophosphoryl-MurNAc-pentapeptide, known as lipid I. In Francisella tularensis subsp. tularensis (strain FSC 198), this protein is Phospho-N-acetylmuramoyl-pentapeptide-transferase.